Here is a 79-residue protein sequence, read N- to C-terminus: Small ribosomal subunit protein bS18 (79 aa).

This sequence belongs to the bacterial ribosomal protein bS18 family. As to quaternary structure, part of the 30S ribosomal subunit. Forms a tight heterodimer with protein bS6.

Its function is as follows. Binds as a heterodimer with protein bS6 to the central domain of the 16S rRNA, where it helps stabilize the platform of the 30S subunit. The chain is Small ribosomal subunit protein bS18 from Nitrobacter hamburgensis (strain DSM 10229 / NCIMB 13809 / X14).